A 92-amino-acid chain; its full sequence is Small ribosomal subunit protein uS19 (92 aa).

Belongs to the universal ribosomal protein uS19 family.

In terms of biological role, protein S19 forms a complex with S13 that binds strongly to the 16S ribosomal RNA. This Rickettsia bellii (strain OSU 85-389) protein is Small ribosomal subunit protein uS19.